Reading from the N-terminus, the 373-residue chain is tRNA (guanine(26)-N(2))-dimethyltransferase (373 aa).

The region spanning 2-365 (KIISEGETKL…AELSDLVVLI (364 aa)) is the Trm1 methyltransferase domain. S-adenosyl-L-methionine contacts are provided by Arg-35, Arg-66, Asp-86, Asp-113, and Ala-114.

Belongs to the class I-like SAM-binding methyltransferase superfamily. Trm1 family.

It catalyses the reaction guanosine(26) in tRNA + 2 S-adenosyl-L-methionine = N(2)-dimethylguanosine(26) in tRNA + 2 S-adenosyl-L-homocysteine + 2 H(+). Its function is as follows. Dimethylates a single guanine residue at position 26 of a number of tRNAs using S-adenosyl-L-methionine as donor of the methyl groups. This is tRNA (guanine(26)-N(2))-dimethyltransferase from Methanococcus maripaludis (strain C5 / ATCC BAA-1333).